A 333-amino-acid chain; its full sequence is Ketol-acid reductoisomerase (NADP(+)) (333 aa).

The 179-residue stretch at 1–179 (MFYDDDADLT…GGTRAGVIKT (179 aa)) folds into the KARI N-terminal Rossmann domain. NADP(+)-binding positions include 22-25 (YGSQ), lysine 45, serine 48, serine 50, and 80-83 (DTAQ). The active site involves histidine 105. Glycine 131 is a binding site for NADP(+). Residues 180-325 (TFKDETETDL…KRLRDLMSWV (146 aa)) form the KARI C-terminal knotted domain. Mg(2+) is bound by residues aspartate 188, glutamate 192, glutamate 224, and glutamate 228. Serine 249 contributes to the substrate binding site.

This sequence belongs to the ketol-acid reductoisomerase family. The cofactor is Mg(2+).

The enzyme catalyses (2R)-2,3-dihydroxy-3-methylbutanoate + NADP(+) = (2S)-2-acetolactate + NADPH + H(+). It carries out the reaction (2R,3R)-2,3-dihydroxy-3-methylpentanoate + NADP(+) = (S)-2-ethyl-2-hydroxy-3-oxobutanoate + NADPH + H(+). The protein operates within amino-acid biosynthesis; L-isoleucine biosynthesis; L-isoleucine from 2-oxobutanoate: step 2/4. It functions in the pathway amino-acid biosynthesis; L-valine biosynthesis; L-valine from pyruvate: step 2/4. Involved in the biosynthesis of branched-chain amino acids (BCAA). Catalyzes an alkyl-migration followed by a ketol-acid reduction of (S)-2-acetolactate (S2AL) to yield (R)-2,3-dihydroxy-isovalerate. In the isomerase reaction, S2AL is rearranged via a Mg-dependent methyl migration to produce 3-hydroxy-3-methyl-2-ketobutyrate (HMKB). In the reductase reaction, this 2-ketoacid undergoes a metal-dependent reduction by NADPH to yield (R)-2,3-dihydroxy-isovalerate. The sequence is that of Ketol-acid reductoisomerase (NADP(+)) from Mycobacterium avium (strain 104).